The following is a 356-amino-acid chain: 3-dehydroquinate synthase (356 aa).

NAD(+) is bound by residues aspartate 69–lysine 74, glycine 103–aspartate 107, threonine 127–threonine 128, lysine 140, and lysine 149. Zn(2+) contacts are provided by glutamate 182, histidine 245, and histidine 262.

The protein belongs to the sugar phosphate cyclases superfamily. Dehydroquinate synthase family. Requires Co(2+) as cofactor. The cofactor is Zn(2+). It depends on NAD(+) as a cofactor.

Its subcellular location is the cytoplasm. The enzyme catalyses 7-phospho-2-dehydro-3-deoxy-D-arabino-heptonate = 3-dehydroquinate + phosphate. The protein operates within metabolic intermediate biosynthesis; chorismate biosynthesis; chorismate from D-erythrose 4-phosphate and phosphoenolpyruvate: step 2/7. Functionally, catalyzes the conversion of 3-deoxy-D-arabino-heptulosonate 7-phosphate (DAHP) to dehydroquinate (DHQ). In Pseudoalteromonas translucida (strain TAC 125), this protein is 3-dehydroquinate synthase.